A 160-amino-acid polypeptide reads, in one-letter code: Protein cornichon homolog 3 (160 aa).

At 1 to 10 the chain is on the cytoplasmic side; sequence MAFTFAAFCY. Residues 11-31 traverse the membrane as a helical segment; sequence MLSLVLCAALIFFAIWHIIAF. Residues 32–72 lie on the Lumenal side of the membrane; sequence DELRTDFKSPIDQCNPVHARERLRNIERICFLLRKLVLPEY. Residues 73-93 traverse the membrane as a helical segment; that stretch reads SIHSLFCVMFLCAQEWLTLGL. Residues 94–138 lie on the Cytoplasmic side of the membrane; the sequence is NVPLLFYHFWRYFHCPADSSELAYDPPVVMNADTLSYCQKEAWCK. The chain crosses the membrane as a helical span at residues 139 to 159; sequence LAFYLLSFFYYLYCMIYTLVS. Residue Ser160 is a topological domain, lumenal.

This sequence belongs to the cornichon family. Acts as an auxiliary subunit for AMPA-selective glutamate receptors (AMPARs). Found in a complex with GRIA1, GRIA2, GRIA3, GRIA4, CNIH2, CACNG2, CACNG3, CACNG4, CACNG5, CACNG7 and CACNG8. Brain. Expressed in the neocortex, hippocampal formation, and cerebellum (at protein level).

Its subcellular location is the postsynaptic cell membrane. Functionally, regulates the trafficking and gating properties of AMPA-selective glutamate receptors (AMPARs). Promotes their targeting to the cell membrane and synapses and modulates their gating properties by regulating their rates of activation, deactivation and desensitization. The chain is Protein cornichon homolog 3 (Cnih3) from Rattus norvegicus (Rat).